A 171-amino-acid polypeptide reads, in one-letter code: Shikimate kinase (171 aa).

Position 14 to 19 (14 to 19 (GAGKST)) interacts with ATP. Residue Ser18 coordinates Mg(2+). Substrate is bound by residues Asp36, Arg60, and Gly82. An ATP-binding site is contributed by Arg120. Arg139 contributes to the substrate binding site. Gln156 contacts ATP.

Belongs to the shikimate kinase family. In terms of assembly, monomer. Mg(2+) is required as a cofactor.

Its subcellular location is the cytoplasm. It carries out the reaction shikimate + ATP = 3-phosphoshikimate + ADP + H(+). The protein operates within metabolic intermediate biosynthesis; chorismate biosynthesis; chorismate from D-erythrose 4-phosphate and phosphoenolpyruvate: step 5/7. Catalyzes the specific phosphorylation of the 3-hydroxyl group of shikimic acid using ATP as a cosubstrate. In Shewanella sp. (strain MR-4), this protein is Shikimate kinase.